The following is a 465-amino-acid chain: Ras GTPase-activating protein-binding protein 1 (465 aa).

In terms of domain architecture, NTF2 spans 11–133; sequence VGREFVRQYY…FYVHNDIFRY (123 aa). Glycyl lysine isopeptide (Lys-Gly) (interchain with G-Cter in ubiquitin) cross-links involve residues lysine 36, lysine 50, lysine 59, lysine 64, lysine 76, and lysine 123. The tract at residues 142–224 is acidic disordered region; it reads VTEPQEESEE…EAALEEAAPD (83 aa). Threonine 143 is modified (phosphothreonine). The interval 144–330 is disordered; sequence EPQEESEEEV…GEPGDVEPRR (187 aa). Composition is skewed to acidic residues over residues 145–157 and 184–205; these read PQEE…EEPE and EHLE…EPEP. Phosphoserine is present on serine 149. Phosphoserine is present on residues serine 231, serine 248, and serine 251. A compositionally biased stretch (polar residues) spans 248 to 257; it reads SWASVTSKNL. 2 stretches are compositionally biased toward basic and acidic residues: residues 295–305 and 316–330; these read PQRDQRVREQR and PIRE…EPRR. Positions 338-413 constitute an RRM domain; sequence HQLFIGNLPH…VRLNVEEKKT (76 aa). Glycyl lysine isopeptide (Lys-Gly) (interchain with G-Cter in ubiquitin) cross-links involve residues lysine 351 and lysine 355. Serine 371 carries the phosphoserine modification. A Glycyl lysine isopeptide (Lys-Gly) (interchain with G-Cter in ubiquitin) cross-link involves residue lysine 374. Lysine 374 carries the N6-acetyllysine; alternate modification. Lysine 374 participates in a covalent cross-link: Glycyl lysine isopeptide (Lys-Gly) (interchain with G-Cter in SUMO2); alternate. Residue lysine 391 forms a Glycyl lysine isopeptide (Lys-Gly) (interchain with G-Cter in ubiquitin); alternate linkage. The RG-rich region stretch occupies residues 408–464; the sequence is VEEKKTRAAREGDRRDNRLRGPGGPRGGPSGGMRGPPRGGMVQKPGFGVGRGITTPR. Residues 411 to 426 are compositionally biased toward basic and acidic residues; sequence KKTRAAREGDRRDNRL. The interval 411-465 is disordered; it reads KKTRAAREGDRRDNRLRGPGGPRGGPSGGMRGPPRGGMVQKPGFGVGRGITTPRQ. Position 427 is an asymmetric dimethylarginine (arginine 427). Positions 428 to 445 are enriched in gly residues; that stretch reads GPGGPRGGPSGGMRGPPR. Arginine 433 is subject to Asymmetric dimethylarginine; alternate. An omega-N-methylarginine; alternate mark is found at arginine 433, arginine 445, arginine 458, and arginine 464. At arginine 458 the chain carries Dimethylated arginine; alternate.

In terms of assembly, homodimer and oligomer. Component of a TAU mRNP complex, at least composed of IGF2BP1, ELAVL4 and G3BP1. Binds to the SH3 domain of Ras GTPase-activating protein (RASA1) in proliferating cells. No interaction in quiescent cells. Interacts (via NTF2 domain) with USP10; inhibiting stress granule formation by lowering G3BP1 valence. Interacts (via NTF2 domain) with CAPRIN1; promoting stress granule formation by lowering the saturation-concentration of G3BP1. Interacts (via NTF2 domain) with UBAP2L; promoting stress granule formation. Associates (via RG-rich region) with 40S ribosome subunits. Interacts with RPTOR and SPAG5; this complex is increased by oxidative stress. Interacts with ATXN2L. Interacts with STYXL1. Interacts with CGAS (via N-terminus); this interaction promotes the DNA-binding and activation of CGAS. Interacts (via C-terminus) with RIGI. Interacts with PABPC1. Interacts with QKI (isoforms QKI6 and QKI7); directing N(7)-methylguanine-containing mRNAs to stress granules. It depends on Mg(2+) as a cofactor. In terms of processing, phosphorylation of the acidic disordered region regulates stress granule assembly. RASA1-dependent phosphorylation of Ser-149 induces a conformational change that prevents self-association. Dephosphorylation after HRAS activation is required for stress granule assembly. Ser-149 phosphorylation induces partial nuclear localization. Arg-435 is dimethylated, probably to asymmetric dimethylarginine. Post-translationally, ubiquitinated by TRIM21 via 'Lys-63'-linked polyubiquitination in the NTF2 domain in response to heat shock, leading to stress granule disassembly: ubiquitination promotes interaction with the FAF2 adapter, followed by interaction with VCP, which extracts G3BP1 from stress granules, leading to stress granule disassembly. In case of prolonged stress, ubiquitination by TRIM21 leads to autophagy-dependent degradation of G3BP1 via recruitment of ubiquitinated G3BP1 by SQSTM1 and/or CALCOCO2 to autophagosomes. As to expression, ubiquitous.

The protein localises to the cytoplasm. Its subcellular location is the cytosol. It localises to the perikaryon. It is found in the stress granule. The protein resides in the nucleus. The catalysed reaction is ATP + H2O = ADP + phosphate + H(+). With respect to regulation, under physiological conditions, G3BP1 adopts a compact state that is stabilized by intramolecular interactions between the RG-rich and the acidic regions that inhibit phase separation. Upon stress, polysomes disassemble and mRNAs are released in an unfolded protein-free state. Binding of unfolded mRNA to G3BP1 outcompetes the intramolecular interactions and RNA-bound G3BP1 adopts an expanded conformation in which the RG-rich region becomes exposed to engage in protein-protein and protein-RNA interactions, allowing physical cross-linking of RNA molecules to form protein-RNA condensates, leading to liquid-liquid phase separation (LLPS). Its function is as follows. Protein involved in various processes, such as stress granule formation and innate immunity. Plays an essential role in stress granule formation. Stress granules are membraneless compartments that store mRNAs and proteins, such as stalled translation pre-initiation complexes, in response to stress. Promotes formation of stress granules phase-separated membraneless compartment by undergoing liquid-liquid phase separation (LLPS) upon unfolded RNA-binding: functions as a molecular switch that triggers RNA-dependent LLPS in response to a rise in intracellular free RNA concentrations. Also acts as an ATP- and magnesium-dependent helicase: unwinds DNA/DNA, RNA/DNA, and RNA/RNA substrates with comparable efficiency. Acts unidirectionally by moving in the 5' to 3' direction along the bound single-stranded DNA. Unwinds preferentially partial DNA and RNA duplexes having a 17 bp annealed portion and either a hanging 3' tail or hanging tails at both 5'- and 3'-ends. Plays an essential role in innate immunity by promoting CGAS and RIGI activity. Participates in the DNA-triggered cGAS/STING pathway by promoting the DNA binding and activation of CGAS. Triggers the condensation of cGAS, a process probably linked to the formation of membrane-less organelles. Also enhances RIGI-induced type I interferon production probably by helping RIGI at sensing pathogenic RNA. May also act as a phosphorylation-dependent sequence-specific endoribonuclease in vitro: Cleaves exclusively between cytosine and adenine and cleaves MYC mRNA preferentially at the 3'-UTR. In Mus musculus (Mouse), this protein is Ras GTPase-activating protein-binding protein 1 (G3bp1).